Reading from the N-terminus, the 152-residue chain is Ribosome maturation factor RimP (152 aa).

This sequence belongs to the RimP family.

Its subcellular location is the cytoplasm. Its function is as follows. Required for maturation of 30S ribosomal subunits. This Ruminiclostridium cellulolyticum (strain ATCC 35319 / DSM 5812 / JCM 6584 / H10) (Clostridium cellulolyticum) protein is Ribosome maturation factor RimP.